Consider the following 650-residue polypeptide: MLLLSGSVLLMASSLAWSAEFSASFKGTDIQEFINTVSKNLNKTVIIDPSVSGTITVRSYDMMNEEQYYQFFLSVLDVYGFTVIPMDNNVLKIIRSKDAKSTSMPLATDRQPGIGDEVVTRVVPVNNVAARDFGRSSRELNDNAWRGTCGDYEPANVVVMTGRAGVIHAVMTIVERVDQTGDRNVTTIPLSYASSTEVVKMVNELNKMDEKSALPGMLTANVVADERTNSAAGFGEPNSRQRVIDMVKQLDRQQAVQGNTKVIYLKYAKAADLVEVLTGVGDSIQTDQQNALPALRKDISIKAHEQTNSLIVNAAPDIMRDLEQVIAQLDIRRPQVLVEAIIAEVQDADGMNLGVQWANKNAGVTQFTNTGLPITTMMAGADQFRRDGTLGTAATTALGGFNGIAAGFYQGNWGMLMTALSSNSKNDILATPSIVTLDNMEATFNVGQEVPVLAGSQTTSGDNVFQTVERKTVGIKLKVKPQINEGDSVLLEIEQEVSSVADAASSSSTNLGATFNTRTVNNAVLVSSGDTVVVGGLLDKSTNESANKVPLLGDIPVLGYLFRSNSTETKKRNLMLFIRPSIIRDRSQFQSASASKYHSFSAEENKQRNVSNGEGGLLDNDLLRLPEGGNAYTFRQVQSSIVAFYPAGGK.

The first 18 residues, 1 to 18, serve as a signal peptide directing secretion; the sequence is MLLLSGSVLLMASSLAWS. Residues 20 to 115 are N0; sequence EFSASFKGTD…LATDRQPGIG (96 aa). Residues 117–181 are N1; it reads EVVTRVVPVN…TIVERVDQTG (65 aa). The N2 stretch occupies residues 182–255; the sequence is DRNVTTIPLS…MVKQLDRQQA (74 aa). The interval 258-330 is N3; that stretch reads GNTKVIYLKY…DLEQVIAQLD (73 aa). A secretin region spans residues 335 to 585; it reads QVLVEAIIAE…LFIRPSIIRD (251 aa). Residues 587–650 form a s domain region; the sequence is SQFQSASASK…IVAFYPAGGK (64 aa).

This sequence belongs to the bacterial secretin family. GSP D subfamily. As to quaternary structure, forms a cylindrical channel with 15 subunits.

The protein localises to the cell outer membrane. Functionally, involved in a type II secretion system (T2SS, formerly general secretion pathway, GSP) for the export of proteins. Required for the translocation of the multiple pectic enzymes. This subunit forms the outer membrane channel. This chain is Secretin OutD (outD), found in Pectobacterium carotovorum subsp. carotovorum (Erwinia carotovora subsp. carotovora).